Here is a 485-residue protein sequence, read N- to C-terminus: NADH-quinone oxidoreductase subunit N (485 aa).

Transmembrane regions (helical) follow at residues 8 to 28 (LIALLPLLIVGLTVVVVMLSI), 35 to 55 (FLNATLSVIGLNAALVSLWFV), 71 to 91 (GFAMLYTGLVLLASLATCTFA), 105 to 125 (FYLLVLIASLGGILLTNANHL), 127 to 147 (ALFLGIELISLPLFGLIGYAF), 159 to 179 (YTILSAAASSFLLFGMALVYA), 203 to 223 (LLAGFGLMIVGLGFKLSLVPF), 235 to 255 (PAPVSTFLATASKIAIFGVVM), 271 to 291 (VVLGIIAFASIIFGNLMALSQ), 297 to 317 (LLGYSSISHLGYLLVALIALQ), 326 to 346 (VGVYLAGYLFSSLGAFGVVSL), 373 to 393 (AAVMTVMMLSLAGIPMTLGFI), 408 to 430 (WWLVAAVVVGSAIGLYYYLRVAV), and 455 to 475 (IVVLISALLVLVLGVWPQPLI).

The protein belongs to the complex I subunit 2 family. As to quaternary structure, NDH-1 is composed of 13 different subunits. Subunits NuoA, H, J, K, L, M, N constitute the membrane sector of the complex.

The protein resides in the cell inner membrane. The catalysed reaction is a quinone + NADH + 5 H(+)(in) = a quinol + NAD(+) + 4 H(+)(out). Its function is as follows. NDH-1 shuttles electrons from NADH, via FMN and iron-sulfur (Fe-S) centers, to quinones in the respiratory chain. The immediate electron acceptor for the enzyme in this species is believed to be ubiquinone. Couples the redox reaction to proton translocation (for every two electrons transferred, four hydrogen ions are translocated across the cytoplasmic membrane), and thus conserves the redox energy in a proton gradient. This chain is NADH-quinone oxidoreductase subunit N, found in Salmonella dublin (strain CT_02021853).